Reading from the N-terminus, the 517-residue chain is Glucans biosynthesis protein G (517 aa).

An N-terminal signal peptide occupies residues 1 to 28 (MKHKLQMMKMRWLSAAVMLTLYTSSSWA).

This sequence belongs to the OpgD/OpgG family.

It is found in the periplasm. It functions in the pathway glycan metabolism; osmoregulated periplasmic glucan (OPG) biosynthesis. Its function is as follows. Involved in the biosynthesis of osmoregulated periplasmic glucans (OPGs). This Escherichia coli O1:K1 / APEC protein is Glucans biosynthesis protein G.